The primary structure comprises 741 residues: Transketolase, chloroplastic (741 aa).

Residues 1–67 (MASSSSLTLS…TKQQFSVRAS (67 aa)) constitute a chloroplast transit peptide. Histidine 103 lines the substrate pocket. Residues histidine 143 and 192-194 (GPL) contribute to the thiamine diphosphate site. Aspartate 233 is a Mg(2+) binding site. Thiamine diphosphate contacts are provided by glycine 234 and asparagine 263. Mg(2+) contacts are provided by asparagine 263 and isoleucine 265. Substrate is bound by residues histidine 340, arginine 434, and serine 461. A thiamine diphosphate-binding site is contributed by histidine 340. Thiamine diphosphate contacts are provided by glutamate 488 and phenylalanine 515. The active-site Proton donor is the glutamate 488. Positions 539, 547, and 598 each coordinate substrate.

It belongs to the transketolase family. As to quaternary structure, homodimer. Mg(2+) serves as cofactor. Ca(2+) is required as a cofactor. Requires Mn(2+) as cofactor. It depends on Co(2+) as a cofactor. The cofactor is thiamine diphosphate.

It localises to the plastid. It is found in the chloroplast thylakoid membrane. The enzyme catalyses D-sedoheptulose 7-phosphate + D-glyceraldehyde 3-phosphate = aldehydo-D-ribose 5-phosphate + D-xylulose 5-phosphate. It functions in the pathway carbohydrate biosynthesis; Calvin cycle. Functionally, catalyzes the reversible transfer of a two-carbon ketol group from fructose-6-phosphate or sedoheptulose-7-phosphate to glyceraldehyde-3-phosphate to yield xylulose-5-phosphate and erythrose-4-phosphate or ribose-5-phosphate, respectively. The protein is Transketolase, chloroplastic of Solanum tuberosum (Potato).